Consider the following 168-residue polypeptide: CS3 fimbrial subunit A (168 aa).

Residues 1–22 (MLKIKYLLIGLSLSAMSSYSLA) form the signal peptide.

Post-translationally, a longer minor form, starting at amino acid 15, has been detected by amino acid sequencing. This is probably due to alternative processing of the signal peptide.

Its subcellular location is the fimbrium. Its function is as follows. Fimbriae (also called pili), polar filaments radiating from the surface of the bacterium to a length of 0.5-1.5 micrometers and numbering 100-300 per cell, enable bacteria to colonize the epithelium of specific host organs. The sequence is that of CS3 fimbrial subunit A from Escherichia coli.